An 838-amino-acid chain; its full sequence is Protein translocase subunit SecA (838 aa).

ATP contacts are provided by residues Gln-86, 104 to 108 (GEGKT), and Asp-493. Disordered regions lie at residues 517 to 536 (RRID…PGSS) and 789 to 838 (KVAE…CCGQ). Over residues 801–819 (TDGDSKAKRQPVRKKETVG) the composition is skewed to basic and acidic residues. The Zn(2+) site is built by Cys-824, Cys-826, Cys-835, and Cys-836.

This sequence belongs to the SecA family. In terms of assembly, monomer and homodimer. Part of the essential Sec protein translocation apparatus which comprises SecA, SecYEG and auxiliary proteins SecDF. Other proteins may also be involved. Requires Zn(2+) as cofactor.

It localises to the cell membrane. The protein resides in the cytoplasm. It catalyses the reaction ATP + H2O + cellular proteinSide 1 = ADP + phosphate + cellular proteinSide 2.. Its function is as follows. Part of the Sec protein translocase complex. Interacts with the SecYEG preprotein conducting channel. Has a central role in coupling the hydrolysis of ATP to the transfer of proteins into and across the cell membrane, serving as an ATP-driven molecular motor driving the stepwise translocation of polypeptide chains across the membrane. The sequence is that of Protein translocase subunit SecA from Halalkalibacterium halodurans (strain ATCC BAA-125 / DSM 18197 / FERM 7344 / JCM 9153 / C-125) (Bacillus halodurans).